A 275-amino-acid polypeptide reads, in one-letter code: Probable ABC transporter permease protein NosY (275 aa).

Transmembrane regions (helical) follow at residues Trp-20–Ala-40, Ser-60–Gly-80, Ile-111–Val-131, Phe-146–Ser-166, Leu-179–Leu-199, and Ala-250–Phe-270.

As to quaternary structure, the complex may be composed of an ATP-binding protein (NosF), a transmembrane protein (NosY) and a solute-binding protein (NosD).

It localises to the cell inner membrane. Functionally, required for the assembly of the copper chromophores of nitrous oxide reductase. Could be part of the ABC transporter complex NosDFY. In Pseudomonas aeruginosa (strain ATCC 15692 / DSM 22644 / CIP 104116 / JCM 14847 / LMG 12228 / 1C / PRS 101 / PAO1), this protein is Probable ABC transporter permease protein NosY (nosY).